Reading from the N-terminus, the 159-residue chain is Large ribosomal subunit protein uL10 (159 aa).

Belongs to the universal ribosomal protein uL10 family. As to quaternary structure, part of the ribosomal stalk of the 50S ribosomal subunit. The N-terminus interacts with L11 and the large rRNA to form the base of the stalk. The C-terminus forms an elongated spine to which L12 dimers bind in a sequential fashion forming a multimeric L10(L12)X complex.

Its function is as follows. Forms part of the ribosomal stalk, playing a central role in the interaction of the ribosome with GTP-bound translation factors. The chain is Large ribosomal subunit protein uL10 from Campylobacter jejuni subsp. jejuni serotype O:6 (strain 81116 / NCTC 11828).